Here is a 107-residue protein sequence, read N- to C-terminus: MMKVLVVVALLVTHISYSSSEGIDDLEADELLSLMANEQTRKECIPKHHECTSNKHGCCRGNFFKYKCQCTTVVTQDGEQTERCFCGTPPHHKAAELVVGFGKKIFG.

The first 20 residues, 1–20 (MMKVLVVVALLVTHISYSSS), serve as a signal peptide directing secretion. Residues 21–41 (EGIDDLEADELLSLMANEQTR) constitute a propeptide that is removed on maturation. 4 disulfide bridges follow: Cys-44-Cys-59, Cys-51-Cys-68, Cys-58-Cys-86, and Cys-70-Cys-84.

It belongs to the neurotoxin 19 (CSTX) family. 04 (U1-Lctx) subfamily. In terms of tissue distribution, expressed by the venom gland.

The protein resides in the secreted. The polypeptide is U1-lycotoxin-Ls1b (Lycosa singoriensis (Wolf spider)).